Reading from the N-terminus, the 292-residue chain is 4-hydroxy-tetrahydrodipicolinate synthase (292 aa).

Thr45 contacts pyruvate. Tyr133 (proton donor/acceptor) is an active-site residue. Catalysis depends on Lys161, which acts as the Schiff-base intermediate with substrate. Pyruvate is bound at residue Ile203.

The protein belongs to the DapA family. Homotetramer; dimer of dimers.

The protein localises to the cytoplasm. It carries out the reaction L-aspartate 4-semialdehyde + pyruvate = (2S,4S)-4-hydroxy-2,3,4,5-tetrahydrodipicolinate + H2O + H(+). It participates in amino-acid biosynthesis; L-lysine biosynthesis via DAP pathway; (S)-tetrahydrodipicolinate from L-aspartate: step 3/4. In terms of biological role, catalyzes the condensation of (S)-aspartate-beta-semialdehyde [(S)-ASA] and pyruvate to 4-hydroxy-tetrahydrodipicolinate (HTPA). The sequence is that of 4-hydroxy-tetrahydrodipicolinate synthase from Shigella dysenteriae serotype 1 (strain Sd197).